Consider the following 312-residue polypeptide: DNA-directed RNA polymerase subunit alpha (312 aa).

An alpha N-terminal domain (alpha-NTD) region spans residues Met1 to Asp226. The segment at Lys243–Asp312 is alpha C-terminal domain (alpha-CTD).

Belongs to the RNA polymerase alpha chain family. In terms of assembly, homodimer. The RNAP catalytic core consists of 2 alpha, 1 beta, 1 beta' and 1 omega subunit. When a sigma factor is associated with the core the holoenzyme is formed, which can initiate transcription.

The enzyme catalyses RNA(n) + a ribonucleoside 5'-triphosphate = RNA(n+1) + diphosphate. DNA-dependent RNA polymerase catalyzes the transcription of DNA into RNA using the four ribonucleoside triphosphates as substrates. The sequence is that of DNA-directed RNA polymerase subunit alpha from Lactobacillus delbrueckii subsp. bulgaricus (strain ATCC BAA-365 / Lb-18).